The chain runs to 268 residues: MEDFLLSNGYQLGKTIGEGTYSKVKEAFSKKHQRKVAIKIIDKMGGPEEFIQRFLPRELQIVRTLDHKNIIQVYEMLESADGKIYLVMELAEGGDVFDCVLNGGPLPESRAKALFRQMVEAIRYCHGCGVAHRDLKCENALLQGFNLKLTDFGFAKVLPKSRRELSQTFCGSTAYAAPEVLQGIPHDSKKGDVWSMGVVLYVMLCASLPFDDTDIPKMLWQQQKGVSFPTHLGISTECQDLLKRLLEPDMILRPSIEEVSWHPWLAST.

Residues 10-265 (YQLGKTIGEG…IEEVSWHPWL (256 aa)) enclose the Protein kinase domain. ATP is bound by residues 16 to 24 (IGEGTYSKV) and K39. D134 serves as the catalytic Proton acceptor. At S166 the chain carries Phosphoserine; by autocatalysis. T168 is subject to Phosphothreonine; by PDPK1.

Belongs to the protein kinase superfamily. CAMK Ser/Thr protein kinase family. It depends on Mg(2+) as a cofactor. Mn(2+) is required as a cofactor. Post-translationally, autophosphorylated at Ser-166. Phosphorylation at Thr-168 by PDPK1 activates the serine/threonine protein kinase activity. Developmentally expressed in testicular germ cells. In adult testis, expression was detected in round and condensing spermatids, but not in meiotic pachytene spermatocytes. Not expressed in brain, ovary, kidney, liver or early embryonic cells.

Its subcellular location is the cell projection. It is found in the cilium. The protein localises to the flagellum. The catalysed reaction is L-seryl-[protein] + ATP = O-phospho-L-seryl-[protein] + ADP + H(+). The enzyme catalyses L-threonyl-[protein] + ATP = O-phospho-L-threonyl-[protein] + ADP + H(+). Activated by phosphorylation on Thr-168 by PDPK1. Its function is as follows. Serine/threonine protein kinase required for spermatid development and male fertility. The protein is Testis-specific serine/threonine-protein kinase 3 of Mus musculus (Mouse).